We begin with the raw amino-acid sequence, 308 residues long: Transcriptional adapter 1-2 (308 aa).

The protein belongs to the TADA1 family. As to quaternary structure, component of the Spt-Ada-Gcn5 acetyltransferase (SAGA) complex consisting of wda/Taf5L, Saf6, Taf9, Taf10b, Taf12, Ada1, Spt3, Spt7, Spt20, Sf3b3, Sf3b5, Nipped-A/Tra1, a histone acetyltransferase (HAT) module made up of Gcn5, Ada2b (Isoform B), Ada3 and Sgf29, and a deubiquitinase (DUB) module made up of not/nonstop, Sgf11 and e(y)2 tethered to SAGA by Atxn7. Not a component of the Ada2a-containing ATAC complex.

It localises to the nucleus. Its function is as follows. Component of the transcription regulatory complex SAGA, a multiprotein complex that activates transcription by remodeling chromatin and mediating histone acetylation and deubiquitination. The SAGA complex predominantly acetylates histone H3. This chain is Transcriptional adapter 1-2, found in Drosophila melanogaster (Fruit fly).